The primary structure comprises 282 residues: RsbT co-antagonist protein RsbRC (282 aa).

2 positions are modified to phosphoserine: serine 165 and serine 174. Residues 165–276 (SAPVIVLFHS…STLASAIASD (112 aa)) form the STAS domain. Phosphothreonine is present on threonine 186.

Probably present in the stressosome with RsbRA, RsbRB, RsbRD and RsbS. Phosphorylated by RsbT.

Its function is as follows. One of 4 functionally non-identical RsbR paralogs, it functions in the environmental signaling branch of the general stress response. In terms of biological role, negative regulator of sigma-B activity. Non-phosphorylated RsbS binds to RsbT, preventing its association with RsbU. Requires any one of RsbRA, RsbRB, RsbRC or RsbRD to sequester RsbT. When RsbS and the RsbR paralog(s) are phosphorylated, they release RsbT, which can then bind and activate RsbU. The chain is RsbT co-antagonist protein RsbRC (rsbRC) from Bacillus subtilis (strain 168).